Here is a 324-residue protein sequence, read N- to C-terminus: Deoxyhypusine hydroxylase (324 aa).

HEAT-like PBS-type repeat units lie at residues 60 to 86 and 94 to 119; these read LKHELAYCLGQTGSDAAIPHLTQVLED and RHEAAEALGALGKAESLGVLQKYLHR. Fe cation contacts are provided by His62, Glu63, His95, and Glu96. Basic and acidic residues predominate over residues 143 to 152; the sequence is EERKQEKLRQ. Residues 143 to 171 are disordered; it reads EERKQEKLRQSDFASVDPAPPMPEDDEKQ. 3 HEAT-like PBS-type repeats span residues 189–219, 227–253, and 260–287; these read KRYRAMFALRDLASPPDLPTAVPAILALAKG, FRHEIAFVFGQLSHPASIPALTEALSN, and VRHEAAEALGSLGDEEGVEETLLKFLHD. Fe cation contacts are provided by His229, Glu230, His262, and Glu263.

This sequence belongs to the deoxyhypusine hydroxylase family. Fe(2+) is required as a cofactor.

The protein resides in the cytoplasm. It is found in the nucleus. The enzyme catalyses [eIF5A protein]-deoxyhypusine + AH2 + O2 = [eIF5A protein]-hypusine + A + H2O. It functions in the pathway protein modification; eIF5A hypusination. Its function is as follows. Catalyzes the hydroxylation of the N(6)-(4-aminobutyl)-L-lysine intermediate to form hypusine, an essential post-translational modification only found in mature eIF-5A factor. In Neurospora crassa (strain ATCC 24698 / 74-OR23-1A / CBS 708.71 / DSM 1257 / FGSC 987), this protein is Deoxyhypusine hydroxylase (lia1).